Reading from the N-terminus, the 185-residue chain is TATA-box-binding protein 2 (185 aa).

A run of 2 repeats spans residues 7–84 (IENI…ANEL) and 100–178 (VQNV…KTQL).

The protein belongs to the TBP family.

General factor that plays a role in the activation of archaeal genes transcribed by RNA polymerase. Binds specifically to the TATA box promoter element which lies close to the position of transcription initiation. The chain is TATA-box-binding protein 2 from Methanosarcina acetivorans (strain ATCC 35395 / DSM 2834 / JCM 12185 / C2A).